The primary structure comprises 325 residues: Putative HTH-type transcriptional regulatory protein HQ_3058A (325 aa).

In terms of domain architecture, HTH cro/C1-type spans 132-186 (LADEREERGWSLGRLATELGVSRRTVSKYEDGMNASIEIAIQLEEVFDEPFSSPL). Residues 143–162 (LGRLATELGVSRRTVSKYED) constitute a DNA-binding region (H-T-H motif). Residues 189–211 (MEGAESVRDSEPTPDDPDPDADD) form a disordered region. Over residues 200–211 (PTPDDPDPDADD) the composition is skewed to acidic residues.

The polypeptide is Putative HTH-type transcriptional regulatory protein HQ_3058A (Haloquadratum walsbyi (strain DSM 16790 / HBSQ001)).